We begin with the raw amino-acid sequence, 402 residues long: CCA-adding enzyme (402 aa).

Residues G32 and R35 each contribute to the ATP site. Residues G32 and R35 each contribute to the CTP site. D45 and D47 together coordinate Mg(2+). R119, D162, R165, R168, and R171 together coordinate ATP. Positions 119, 162, 165, 168, and 171 each coordinate CTP.

The protein belongs to the tRNA nucleotidyltransferase/poly(A) polymerase family. Bacterial CCA-adding enzyme type 3 subfamily. In terms of assembly, homodimer. Mg(2+) serves as cofactor.

The catalysed reaction is a tRNA precursor + 2 CTP + ATP = a tRNA with a 3' CCA end + 3 diphosphate. It carries out the reaction a tRNA with a 3' CCA end + 2 CTP + ATP = a tRNA with a 3' CCACCA end + 3 diphosphate. Its function is as follows. Catalyzes the addition and repair of the essential 3'-terminal CCA sequence in tRNAs without using a nucleic acid template. Adds these three nucleotides in the order of C, C, and A to the tRNA nucleotide-73, using CTP and ATP as substrates and producing inorganic pyrophosphate. tRNA 3'-terminal CCA addition is required both for tRNA processing and repair. Also involved in tRNA surveillance by mediating tandem CCA addition to generate a CCACCA at the 3' terminus of unstable tRNAs. While stable tRNAs receive only 3'-terminal CCA, unstable tRNAs are marked with CCACCA and rapidly degraded. The polypeptide is CCA-adding enzyme (Lactococcus lactis subsp. cremoris (strain SK11)).